The chain runs to 735 residues: Muskelin (735 aa).

Position 2 is an N-acetylalanine (A2). In terms of domain architecture, LisH spans 172 to 204; that stretch reads REQEAIRLCLKHFRQHNYTEAFESLQKKTKIAL. Residues 206–258 form the CTLH domain; sequence HPMLTDMHDKLVLKGDFDACEELIEKAVNDGLFNQYISQQEYKPRWSQIIPKS. Kelch repeat units lie at residues 284–330, 339–391, 400–458, 469–515, 526–578, and 597–651; these read TVYL…SCHK, QIYT…FDHQ, MIYT…SRIG, CLYV…TGFT, EIHV…SLQE, and VHYL…AQMD. The interval 701–735 is important for location in the cytosol; the sequence is DHTYAQRTQLFDTLVNFFPDSMTPPKGNLVDLITL.

In terms of assembly, homodimer; may form higher oligomers. Identified in the CTLH complex that contains GID4, RANBP9 and/or RANBP10, MKLN1, MAEA, RMND5A (or alternatively its paralog RMND5B), GID8, ARMC8, WDR26 and YPEL5. Within this complex, MAEA, RMND5A (or alternatively its paralog RMND5B), GID8, WDR26, and RANBP9 and/or RANBP10 form the catalytic core, while GID4, MKLN1, ARMC8 and YPEL5 have ancillary roles. Interacts with RANBP9. Part of a complex consisting of RANBP9, MKLN1 and GID8. Interacts with GABRA1. Interacts with the C-terminal tail of PTGER3. In terms of tissue distribution, detected in brain, especially in hippocampus and cerebellum (at protein level).

Its subcellular location is the cytoplasm. The protein resides in the cytosol. It localises to the nucleus. It is found in the nucleoplasm. The protein localises to the cell projection. Its subcellular location is the ruffle. The protein resides in the cell cortex. It localises to the synapse. It is found in the postsynapse. Functionally, component of the CTLH E3 ubiquitin-protein ligase complex that selectively accepts ubiquitin from UBE2H and mediates ubiquitination and subsequent proteasomal degradation of the transcription factor HBP1. Required for internalization of the GABA receptor GABRA1 from the cell membrane via endosomes and subsequent GABRA1 degradation. Acts as a mediator of cell spreading and cytoskeletal responses to the extracellular matrix component THBS1. This chain is Muskelin (Mkln1), found in Mus musculus (Mouse).